Here is a 346-residue protein sequence, read N- to C-terminus: L-malyl-CoA/beta-methylmalyl-CoA lyase (346 aa).

Residues Glu148 and Asp177 each coordinate Mg(2+). Residues 176–177 (VD) and 253–254 (LH) contribute to the substrate site.

This sequence belongs to the HpcH/HpaI aldolase family. Requires Mg(2+) as cofactor. It depends on Mn(2+) as a cofactor.

The catalysed reaction is (S)-malyl-CoA = glyoxylate + acetyl-CoA. It carries out the reaction (2R,3S)-beta-methylmalyl-CoA = propanoyl-CoA + glyoxylate. Functionally, involved in the methylaspartate cycle. Catalyzes the reversible cleavage of beta-methylmalyl-CoA to propionyl-CoA and glyoxylate, as well as the reversible cleavage of (S)-malyl-CoA to acetyl-CoA and glyoxylate. In addition, it has a small malyl-CoA thioesterase activity. It can also catalyze the cleavage of (S)-citramalyl-CoA to acetyl-CoA and pyruvate. This Haloarcula marismortui (strain ATCC 43049 / DSM 3752 / JCM 8966 / VKM B-1809) (Halobacterium marismortui) protein is L-malyl-CoA/beta-methylmalyl-CoA lyase (citE1).